The following is a 169-amino-acid chain: Lipoprotein signal peptidase (169 aa).

4 consecutive transmembrane segments (helical) span residues 4 to 24 (PICS…IVDL), 42 to 62 (LIPF…SFLA), 70 to 90 (WFFA…MYRS), and 102 to 122 (ALII…GAVI). Residues D123 and D141 contribute to the active site. Residues 137–157 (FNIADTAICIGAALVIFEGFI) form a helical membrane-spanning segment.

Belongs to the peptidase A8 family.

It localises to the cell inner membrane. It catalyses the reaction Release of signal peptides from bacterial membrane prolipoproteins. Hydrolyzes -Xaa-Yaa-Zaa-|-(S,diacylglyceryl)Cys-, in which Xaa is hydrophobic (preferably Leu), and Yaa (Ala or Ser) and Zaa (Gly or Ala) have small, neutral side chains.. It participates in protein modification; lipoprotein biosynthesis (signal peptide cleavage). Functionally, this protein specifically catalyzes the removal of signal peptides from prolipoproteins. The protein is Lipoprotein signal peptidase of Yersinia enterocolitica serotype O:8 / biotype 1B (strain NCTC 13174 / 8081).